The sequence spans 82 residues: Turripeptide OL139 (82 aa).

Residues 58 to 82 (HRTTRDTADKTHGGSQRDRFFQSIA) form a disordered region.

Post-translationally, contains 6 disulfide bonds. Expressed by the venom duct.

It is found in the secreted. In terms of biological role, acts as a neurotoxin by inhibiting an ion channel. This Iotyrris olangoensis (Sea snail) protein is Turripeptide OL139.